Here is a 442-residue protein sequence, read N- to C-terminus: ATP-dependent protease ATPase subunit HslU (442 aa).

Residues isoleucine 18 and 60–65 (GVGKTE) each bind ATP. The segment at 137–156 (PKPKNDWESTETDSSSNTRQ) is disordered. ATP is bound by residues aspartate 255, glutamate 320, and arginine 392.

It belongs to the ClpX chaperone family. HslU subfamily. In terms of assembly, a double ring-shaped homohexamer of HslV is capped on each side by a ring-shaped HslU homohexamer. The assembly of the HslU/HslV complex is dependent on binding of ATP.

It localises to the cytoplasm. Functionally, ATPase subunit of a proteasome-like degradation complex; this subunit has chaperone activity. The binding of ATP and its subsequent hydrolysis by HslU are essential for unfolding of protein substrates subsequently hydrolyzed by HslV. HslU recognizes the N-terminal part of its protein substrates and unfolds these before they are guided to HslV for hydrolysis. The chain is ATP-dependent protease ATPase subunit HslU from Shewanella baltica (strain OS155 / ATCC BAA-1091).